Consider the following 501-residue polypeptide: Aerobic glycerol-3-phosphate dehydrogenase (501 aa).

Position 5–33 (5–33) interacts with FAD; that stretch reads DLIVIGGGINGAGIAADAAGRGLSVLMLE.

It belongs to the FAD-dependent glycerol-3-phosphate dehydrogenase family. It depends on FAD as a cofactor.

The protein localises to the cytoplasm. It catalyses the reaction a quinone + sn-glycerol 3-phosphate = dihydroxyacetone phosphate + a quinol. The protein operates within polyol metabolism; glycerol degradation via glycerol kinase pathway; glycerone phosphate from sn-glycerol 3-phosphate (aerobic route): step 1/1. Its function is as follows. Conversion of glycerol 3-phosphate to dihydroxyacetone. Uses molecular oxygen or nitrate as electron acceptor. In Escherichia coli (strain K12), this protein is Aerobic glycerol-3-phosphate dehydrogenase (glpD).